We begin with the raw amino-acid sequence, 278 residues long: D-aminoacyl-tRNA deacylase (278 aa).

The protein belongs to the DtdA deacylase family. In terms of assembly, monomer. Zn(2+) serves as cofactor.

The enzyme catalyses a D-aminoacyl-tRNA + H2O = a tRNA + a D-alpha-amino acid + H(+). The catalysed reaction is glycyl-tRNA(Ala) + H2O = tRNA(Ala) + glycine + H(+). D-aminoacyl-tRNA deacylase with broad substrate specificity. By recycling D-aminoacyl-tRNA to D-amino acids and free tRNA molecules, this enzyme counteracts the toxicity associated with the formation of D-aminoacyl-tRNA entities in vivo. This Archaeoglobus fulgidus (strain ATCC 49558 / DSM 4304 / JCM 9628 / NBRC 100126 / VC-16) protein is D-aminoacyl-tRNA deacylase.